A 174-amino-acid polypeptide reads, in one-letter code: uncharacterized protein (174 aa).

An N-acetyltransferase domain is found at 42–174 (SNTKNINLYE…GVKGMFWYPR (133 aa)).

This sequence belongs to the acetyltransferase family. Ycf52 subfamily.

Its subcellular location is the plastid. The protein resides in the chloroplast. This is an uncharacterized protein from Porphyra purpurea (Red seaweed).